The chain runs to 205 residues: Pyridoxal 5'-phosphate synthase subunit PdxT (205 aa).

Gly-53 to Ser-55 contributes to the L-glutamine binding site. Cys-85 acts as the Nucleophile in catalysis. Residues Arg-112 and Ile-140 to Arg-141 each bind L-glutamine. Residues His-176 and Glu-178 each act as charge relay system in the active site.

This sequence belongs to the glutaminase PdxT/SNO family. In terms of assembly, in the presence of PdxS, forms a dodecamer of heterodimers. Only shows activity in the heterodimer.

It carries out the reaction aldehydo-D-ribose 5-phosphate + D-glyceraldehyde 3-phosphate + L-glutamine = pyridoxal 5'-phosphate + L-glutamate + phosphate + 3 H2O + H(+). The enzyme catalyses L-glutamine + H2O = L-glutamate + NH4(+). Its pathway is cofactor biosynthesis; pyridoxal 5'-phosphate biosynthesis. Its function is as follows. Catalyzes the hydrolysis of glutamine to glutamate and ammonia as part of the biosynthesis of pyridoxal 5'-phosphate. The resulting ammonia molecule is channeled to the active site of PdxS. This chain is Pyridoxal 5'-phosphate synthase subunit PdxT, found in Haloquadratum walsbyi (strain DSM 16790 / HBSQ001).